A 187-amino-acid polypeptide reads, in one-letter code: Ribosome maturation factor RimM (187 aa).

Polar residues predominate over residues M1 to D17. Residues M1 to V21 form a disordered region. Positions E111 to L184 constitute a PRC barrel domain.

This sequence belongs to the RimM family. Binds ribosomal protein uS19.

It localises to the cytoplasm. In terms of biological role, an accessory protein needed during the final step in the assembly of 30S ribosomal subunit, possibly for assembly of the head region. Essential for efficient processing of 16S rRNA. May be needed both before and after RbfA during the maturation of 16S rRNA. It has affinity for free ribosomal 30S subunits but not for 70S ribosomes. This chain is Ribosome maturation factor RimM, found in Synechococcus sp. (strain CC9311).